The following is a 264-amino-acid chain: uncharacterized protein (264 aa).

The first 23 residues, 1-23, serve as a signal peptide directing secretion; the sequence is MQQWNLTISNILIGLFFCFSAQA.

This is an uncharacterized protein from Shewanella oneidensis (strain ATCC 700550 / JCM 31522 / CIP 106686 / LMG 19005 / NCIMB 14063 / MR-1).